The following is a 379-amino-acid chain: GDSL esterase/lipase At3g05180 (379 aa).

The signal sequence occupies residues 1–27 (METLFHTLLRLLLFVAISHTLSPLAGS). The active-site Nucleophile is the serine 43. Residues asparagine 294 and asparagine 330 are each glycosylated (N-linked (GlcNAc...) asparagine). Active-site residues include aspartate 349 and histidine 352.

It belongs to the 'GDSL' lipolytic enzyme family.

It is found in the secreted. This is GDSL esterase/lipase At3g05180 from Arabidopsis thaliana (Mouse-ear cress).